Here is a 339-residue protein sequence, read N- to C-terminus: GTPase Obg (339 aa).

The region spanning 1-159 is the Obg domain; that stretch reads MKFVDEAFVR…RELKLELKLL (159 aa). Positions 127–147 are disordered; sequence NTHFKSSTNRAPRRTTSGEEG. In terms of domain architecture, OBG-type G spans 160–333; that stretch reads ADVGLLGLPN…LCYDLMSFLE (174 aa). GTP contacts are provided by residues 166–173, 191–195, 213–216, 283–286, and 314–316; these read GLPNAGKS, FTTLY, DIPG, NKID, and SAI. Mg(2+)-binding residues include S173 and T193.

The protein belongs to the TRAFAC class OBG-HflX-like GTPase superfamily. OBG GTPase family. Monomer. Requires Mg(2+) as cofactor.

Its subcellular location is the cytoplasm. Its function is as follows. An essential GTPase which binds GTP, GDP and possibly (p)ppGpp with moderate affinity, with high nucleotide exchange rates and a fairly low GTP hydrolysis rate. Plays a role in control of the cell cycle, stress response, ribosome biogenesis and in those bacteria that undergo differentiation, in morphogenesis control. This Coxiella burnetii (strain CbuG_Q212) (Coxiella burnetii (strain Q212)) protein is GTPase Obg.